A 398-amino-acid chain; its full sequence is uncharacterized protein (398 aa).

The helical transmembrane segment at 88–108 threads the bilayer; the sequence is IGFTIGFAIFFILLFLLSNMV.

This sequence to B.megaterium SpoIV.

The protein localises to the cell membrane. This is an uncharacterized protein from Bacillus subtilis (strain 168).